Consider the following 365-residue polypeptide: Adenosine deaminase (365 aa).

Residues His19 and His21 each coordinate Zn(2+). Substrate is bound by residues His21, Asp23, and Gly181. Zn(2+) is bound at residue His208. Catalysis depends on Glu211, which acts as the Proton donor. Asp300 contributes to the Zn(2+) binding site.

It belongs to the metallo-dependent hydrolases superfamily. Adenosine and AMP deaminases family. Adenosine deaminase subfamily. Requires Zn(2+) as cofactor.

It catalyses the reaction adenosine + H2O + H(+) = inosine + NH4(+). It carries out the reaction 2'-deoxyadenosine + H2O + H(+) = 2'-deoxyinosine + NH4(+). Its function is as follows. Catalyzes the hydrolytic deamination of adenosine and 2-deoxyadenosine. The polypeptide is Adenosine deaminase (Mycobacterium tuberculosis (strain ATCC 25177 / H37Ra)).